The chain runs to 394 residues: Elongation factor Tu (394 aa).

The tr-type G domain maps to 10 to 204 (KPHVNVGTIG…ALDSYIPEPE (195 aa)). The segment at 19 to 26 (GHVDHGKT) is G1. 19 to 26 (GHVDHGKT) provides a ligand contact to GTP. Threonine 26 is a Mg(2+) binding site. The interval 60 to 64 (GITIS) is G2. Residues 81-84 (DCPG) form a G3 region. Residues 81-85 (DCPGH) and 136-139 (NKCD) each bind GTP. Residues 136–139 (NKCD) are G4. The interval 174-176 (SAL) is G5.

It belongs to the TRAFAC class translation factor GTPase superfamily. Classic translation factor GTPase family. EF-Tu/EF-1A subfamily. Monomer.

It localises to the cytoplasm. The catalysed reaction is GTP + H2O = GDP + phosphate + H(+). In terms of biological role, GTP hydrolase that promotes the GTP-dependent binding of aminoacyl-tRNA to the A-site of ribosomes during protein biosynthesis. This is Elongation factor Tu from Pseudoalteromonas atlantica (strain T6c / ATCC BAA-1087).